Consider the following 429-residue polypeptide: MTEIINVTAREILDSRGNPTVEVEVAVGTGDVGRAAVPSGASTGEHEALELRDGDKARYLGKGVRKAVANVIDEIAPAVVGLDASDQAALDARMIALDGTPTKSKLGANAILGVSLAAAKAAATAHGLPLYRYVGGAGARTLPVPLMNILNGGAHADSNVDIQEFMVVPLGLPTFAEALRCGAEIFHALKKVLKGKGAATGVGDEGGYAPSLASNEEALAVIMEAIGQAGYEPGKQVALALDCAASEFYDKKAGKYELEGEGKSFDGKGLVEYYAQLAAKYPIVSIEDGCDEDDWATWKLLTERLGGKLQLVGDDLFVTNVTRLARGIEQGVTNSILVKVNQIGSLTETLEAVRMAHRAGYTTVMSHRSGETEDTTIADLAVACDCGQIKTGSASRTDRIAKYNQLLRIEEELGTSGRYAGRSAFKALR.

Gln-163 contacts (2R)-2-phosphoglycerate. Glu-205 acts as the Proton donor in catalysis. Positions 242, 287, and 314 each coordinate Mg(2+). (2R)-2-phosphoglycerate-binding residues include Lys-339, Arg-368, Ser-369, and Lys-390. Lys-339 (proton acceptor) is an active-site residue.

This sequence belongs to the enolase family. Mg(2+) serves as cofactor.

The protein resides in the cytoplasm. The protein localises to the secreted. It localises to the cell surface. The enzyme catalyses (2R)-2-phosphoglycerate = phosphoenolpyruvate + H2O. The protein operates within carbohydrate degradation; glycolysis; pyruvate from D-glyceraldehyde 3-phosphate: step 4/5. Functionally, catalyzes the reversible conversion of 2-phosphoglycerate (2-PG) into phosphoenolpyruvate (PEP). It is essential for the degradation of carbohydrates via glycolysis. This Anaeromyxobacter dehalogenans (strain 2CP-C) protein is Enolase.